Reading from the N-terminus, the 253-residue chain is uncharacterized protein (253 aa).

This is an uncharacterized protein from Caenorhabditis elegans.